The chain runs to 497 residues: Probable cytosol aminopeptidase (497 aa).

Positions 263 and 268 each coordinate Mn(2+). Lysine 275 is an active-site residue. The Mn(2+) site is built by aspartate 286, aspartate 345, and glutamate 347. Residue arginine 349 is part of the active site.

The protein belongs to the peptidase M17 family. It depends on Mn(2+) as a cofactor.

The protein localises to the cytoplasm. It catalyses the reaction Release of an N-terminal amino acid, Xaa-|-Yaa-, in which Xaa is preferably Leu, but may be other amino acids including Pro although not Arg or Lys, and Yaa may be Pro. Amino acid amides and methyl esters are also readily hydrolyzed, but rates on arylamides are exceedingly low.. The catalysed reaction is Release of an N-terminal amino acid, preferentially leucine, but not glutamic or aspartic acids.. In terms of biological role, presumably involved in the processing and regular turnover of intracellular proteins. Catalyzes the removal of unsubstituted N-terminal amino acids from various peptides. In Agrobacterium fabrum (strain C58 / ATCC 33970) (Agrobacterium tumefaciens (strain C58)), this protein is Probable cytosol aminopeptidase.